The chain runs to 150 residues: Large ribosomal subunit protein bL9 (150 aa).

This sequence belongs to the bacterial ribosomal protein bL9 family.

Binds to the 23S rRNA. In Vibrio parahaemolyticus serotype O3:K6 (strain RIMD 2210633), this protein is Large ribosomal subunit protein bL9.